The chain runs to 623 residues: Low affinity potassium transport system protein Kup (623 aa).

12 helical membrane-spanning segments follow: residues 10–30, 47–67, 102–122, 138–158, 166–186, 214–234, 248–268, 277–297, 338–358, 364–384, 396–416, and 420–440; these read LSAV…TSPL, PDVV…IVSV, ILVI…VITP, PALD…LFVI, VGKL…LLGL, VSFF…ALYA, WFTV…ALLL, PFFL…ATLA, IYIP…IVGF, LAAA…VLFC, FFVY…FSAN, and LFSG…IMTT.

It belongs to the HAK/KUP transporter (TC 2.A.72) family.

It is found in the cell inner membrane. It catalyses the reaction K(+)(in) + H(+)(in) = K(+)(out) + H(+)(out). In terms of biological role, responsible for the low-affinity transport of potassium into the cell. Likely operates as a K(+):H(+) symporter. In Yersinia enterocolitica serotype O:8 / biotype 1B (strain NCTC 13174 / 8081), this protein is Low affinity potassium transport system protein Kup.